Consider the following 449-residue polypeptide: Serine/threonine-protein phosphatase 2A activator 2 (449 aa).

Disordered stretches follow at residues 1–72 (MDSS…DPST) and 378–416 (MSEQ…PTGW). The segment covering 54–69 (NPTPVPETPALPPRPD) has biased composition (pro residues). The span at 389–403 (EENEEEGGEVEVYDD) shows a compositional bias: acidic residues.

The protein belongs to the PTPA-type PPIase family.

It is found in the cytoplasm. The catalysed reaction is [protein]-peptidylproline (omega=180) = [protein]-peptidylproline (omega=0). Its function is as follows. PPIases accelerate the folding of proteins. It catalyzes the cis-trans isomerization of proline imidic peptide bonds in oligopeptides. Acts as a regulatory subunit for PP2A-like phosphatases modulating their activity or substrate specificity, probably by inducing a conformational change in the catalytic subunit, a direct target of the PPIase. Can reactivate inactive phosphatase PP2A-phosphatase methylesterase complexes (PP2Ai) in presence of ATP and Mg(2+) by dissociating the inactive form from the complex. The polypeptide is Serine/threonine-protein phosphatase 2A activator 2 (rrd-2) (Neurospora crassa (strain ATCC 24698 / 74-OR23-1A / CBS 708.71 / DSM 1257 / FGSC 987)).